The following is a 168-amino-acid chain: uncharacterized protein (168 aa).

2 consecutive transmembrane segments (helical) span residues 41 to 61 and 133 to 153; these read LLPWKEILVPLSFVMLFLFFI and KFVISVGDILVFIGVFIFFVL.

The protein localises to the cell membrane. This is an uncharacterized protein from Thermotoga maritima (strain ATCC 43589 / DSM 3109 / JCM 10099 / NBRC 100826 / MSB8).